A 177-amino-acid chain; its full sequence is ATP synthase subunit b (177 aa).

The helical transmembrane segment at His16 to Leu36 threads the bilayer.

Belongs to the ATPase B chain family. In terms of assembly, F-type ATPases have 2 components, F(1) - the catalytic core - and F(0) - the membrane proton channel. F(1) has five subunits: alpha(3), beta(3), gamma(1), delta(1), epsilon(1). F(0) has three main subunits: a(1), b(2) and c(10-14). The alpha and beta chains form an alternating ring which encloses part of the gamma chain. F(1) is attached to F(0) by a central stalk formed by the gamma and epsilon chains, while a peripheral stalk is formed by the delta and b chains.

Its subcellular location is the cell membrane. Functionally, f(1)F(0) ATP synthase produces ATP from ADP in the presence of a proton or sodium gradient. F-type ATPases consist of two structural domains, F(1) containing the extramembraneous catalytic core and F(0) containing the membrane proton channel, linked together by a central stalk and a peripheral stalk. During catalysis, ATP synthesis in the catalytic domain of F(1) is coupled via a rotary mechanism of the central stalk subunits to proton translocation. Its function is as follows. Component of the F(0) channel, it forms part of the peripheral stalk, linking F(1) to F(0). The polypeptide is ATP synthase subunit b (Exiguobacterium sibiricum (strain DSM 17290 / CCUG 55495 / CIP 109462 / JCM 13490 / 255-15)).